The sequence spans 217 residues: Small ribosomal subunit protein uS3 (217 aa).

In terms of domain architecture, KH type-2 spans 38–106 (IRKFIQKELA…QVHINIVEIK (69 aa)).

This sequence belongs to the universal ribosomal protein uS3 family. In terms of assembly, part of the 30S ribosomal subunit. Forms a tight complex with proteins S10 and S14.

Its function is as follows. Binds the lower part of the 30S subunit head. Binds mRNA in the 70S ribosome, positioning it for translation. The polypeptide is Small ribosomal subunit protein uS3 (Streptococcus thermophilus (strain CNRZ 1066)).